Consider the following 314-residue polypeptide: tRNA dimethylallyltransferase (314 aa).

Residue 14-21 (GPTASGKT) participates in ATP binding. Residue 16–21 (TASGKT) coordinates substrate. Interaction with substrate tRNA regions lie at residues 39–42 (DSAQ), 163–167 (QRLQR), and 245–250 (RCVGYR).

Belongs to the IPP transferase family. As to quaternary structure, monomer. Mg(2+) is required as a cofactor.

The enzyme catalyses adenosine(37) in tRNA + dimethylallyl diphosphate = N(6)-dimethylallyladenosine(37) in tRNA + diphosphate. Functionally, catalyzes the transfer of a dimethylallyl group onto the adenine at position 37 in tRNAs that read codons beginning with uridine, leading to the formation of N6-(dimethylallyl)adenosine (i(6)A). The chain is tRNA dimethylallyltransferase from Dechloromonas aromatica (strain RCB).